Consider the following 332-residue polypeptide: Transcription initiation factor IIB 2 (332 aa).

Residues 1-10 (MSDTITTRTY) are compositionally biased toward polar residues. Residues 1-36 (MSDTITTRTYSADAKSRDVRPRESERDETQQDETQV) are disordered. Residues 14–29 (AKSRDVRPRESERDET) are compositionally biased toward basic and acidic residues. The TFIIB-type zinc finger occupies 33-63 (ETQVCPECSGHLVTDEEHGETICEDCGLVVE). Positions 37, 40, 55, and 58 each coordinate Zn(2+). Residues 77-106 (DSAERDSKSRVGAPTTKMMHDKGLSTNIGW) are disordered. 2 consecutive repeat copies span residues 149–232 (GEID…VREL) and 243–324 (QYVP…ELLE).

It belongs to the TFIIB family.

Functionally, stabilizes TBP binding to an archaeal box-A promoter. Also responsible for recruiting RNA polymerase II to the pre-initiation complex (DNA-TBP-TFIIB). The chain is Transcription initiation factor IIB 2 from Haloferax volcanii (strain ATCC 29605 / DSM 3757 / JCM 8879 / NBRC 14742 / NCIMB 2012 / VKM B-1768 / DS2) (Halobacterium volcanii).